Reading from the N-terminus, the 305-residue chain is UDP-3-O-acyl-N-acetylglucosamine deacetylase (305 aa).

Zn(2+)-binding residues include histidine 79, histidine 238, and aspartate 242. Catalysis depends on histidine 265, which acts as the Proton donor.

Belongs to the LpxC family. The cofactor is Zn(2+).

It catalyses the reaction a UDP-3-O-[(3R)-3-hydroxyacyl]-N-acetyl-alpha-D-glucosamine + H2O = a UDP-3-O-[(3R)-3-hydroxyacyl]-alpha-D-glucosamine + acetate. It functions in the pathway glycolipid biosynthesis; lipid IV(A) biosynthesis; lipid IV(A) from (3R)-3-hydroxytetradecanoyl-[acyl-carrier-protein] and UDP-N-acetyl-alpha-D-glucosamine: step 2/6. Catalyzes the hydrolysis of UDP-3-O-myristoyl-N-acetylglucosamine to form UDP-3-O-myristoylglucosamine and acetate, the committed step in lipid A biosynthesis. This Shigella boydii serotype 4 (strain Sb227) protein is UDP-3-O-acyl-N-acetylglucosamine deacetylase.